The sequence spans 150 residues: Group IIC secretory phospholipase A2 (150 aa).

The first 20 residues, 1-20 (MKGIAVFLVFIFCWTTSTLS), serve as a signal peptide directing secretion. 8 disulfides stabilise this stretch: C46/C143, C48/C64, C63/C121, C69/C150, C70/C114, C79/C107, C97/C112, and C99/C105. Y47, G49, and G51 together coordinate Ca(2+). Residue H67 is part of the active site. D68 contributes to the Ca(2+) binding site. N92 is a glycosylation site (N-linked (GlcNAc...) asparagine). The active site involves D115.

The protein belongs to the phospholipase A2 family. Requires Ca(2+) as cofactor.

It is found in the secreted. It catalyses the reaction a 1,2-diacyl-sn-glycero-3-phosphocholine + H2O = a 1-acyl-sn-glycero-3-phosphocholine + a fatty acid + H(+). Its function is as follows. PA2 catalyzes the calcium-dependent hydrolysis of the 2-acyl groups in 3-sn-phosphoglycerides. The protein is Group IIC secretory phospholipase A2 (Pla2g2c) of Rattus norvegicus (Rat).